The chain runs to 388 residues: Chorismate synthase (388 aa).

Residues Arg-39 and Arg-45 each contribute to the NADP(+) site. FMN-binding positions include 132-134 (RSS), 251-252 (NA), Gly-296, 311-315 (KPIPT), and Arg-337.

It belongs to the chorismate synthase family. In terms of assembly, homotetramer. FMNH2 is required as a cofactor.

It carries out the reaction 5-O-(1-carboxyvinyl)-3-phosphoshikimate = chorismate + phosphate. The protein operates within metabolic intermediate biosynthesis; chorismate biosynthesis; chorismate from D-erythrose 4-phosphate and phosphoenolpyruvate: step 7/7. Catalyzes the anti-1,4-elimination of the C-3 phosphate and the C-6 proR hydrogen from 5-enolpyruvylshikimate-3-phosphate (EPSP) to yield chorismate, which is the branch point compound that serves as the starting substrate for the three terminal pathways of aromatic amino acid biosynthesis. This reaction introduces a second double bond into the aromatic ring system. This is Chorismate synthase from Staphylococcus aureus (strain COL).